The chain runs to 92 residues: Progonadoliberin-1 (92 aa).

Positions 1–23 are cleaved as a signal peptide; that stretch reads METIPKLMAAVVLLTVCLEGCSS. A Pyrrolidone carboxylic acid modification is found at Gln-24. Gly-33 is subject to Glycine amide.

The protein belongs to the GnRH family. In terms of processing, the precursor is cleaved by ACE, which removes the Gly-Lys-Arg peptide at the C-terminus, leading to mature hormone. The mature form of Gonadoliberin-1 is also cleaved and degraded by ACE. In terms of tissue distribution, central nervous system.

Its subcellular location is the secreted. Functionally, stimulates the secretion of gonadotropins; it stimulates the secretion of both luteinizing and follicle-stimulating hormones. This is Progonadoliberin-1 (Gnrh1) from Rattus norvegicus (Rat).